We begin with the raw amino-acid sequence, 325 residues long: Transaldolase (325 aa).

Lys-125 serves as the catalytic Schiff-base intermediate with substrate.

Belongs to the transaldolase family. Type 2 subfamily.

The protein localises to the cytoplasm. It carries out the reaction D-sedoheptulose 7-phosphate + D-glyceraldehyde 3-phosphate = D-erythrose 4-phosphate + beta-D-fructose 6-phosphate. It participates in carbohydrate degradation; pentose phosphate pathway; D-glyceraldehyde 3-phosphate and beta-D-fructose 6-phosphate from D-ribose 5-phosphate and D-xylulose 5-phosphate (non-oxidative stage): step 2/3. In terms of biological role, transaldolase is important for the balance of metabolites in the pentose-phosphate pathway. The protein is Transaldolase of Campylobacter jejuni subsp. jejuni serotype O:23/36 (strain 81-176).